We begin with the raw amino-acid sequence, 272 residues long: MNGVSEGTRGCSDRQPGALTQGHSCSRKMNASRCLSEEVGSLRPLTMAVLSASFVVGVLGNGLVPWVTVFRMARTVSTVCFFHLALADFMLSLSLPILVYYIVSRQWLLGEWACKLYTGFVFLTFSTSNCLLVLISVDRCISVLYPVWALNHRTEQRASWLAFGVWLLAAALCSAHLKFRTTRKWNGCMQCYLQFNLENETAQMWTQEVFGRQMAVIMAHFLLGFLGPLAIIGTCAHLIRAKLLREGWVHANRPKRLLLVLVSALSAGSHLT.

The segment at 1–24 (MNGVSEGTRGCSDRQPGALTQGHS) is disordered. The Extracellular segment spans residues 1 to 46 (MNGVSEGTRGCSDRQPGALTQGHSCSRKMNASRCLSEEVGSLRPLT). The N-linked (GlcNAc...) asparagine glycan is linked to N30. Residues 47 to 67 (MAVLSASFVVGVLGNGLVPWV) traverse the membrane as a helical segment. Over 68–78 (TVFRMARTVST) the chain is Cytoplasmic. The chain crosses the membrane as a helical span at residues 79-99 (VCFFHLALADFMLSLSLPILV). Topologically, residues 100–116 (YYIVSRQWLLGEWACKL) are extracellular. A disulfide bond links C114 and C191. The chain crosses the membrane as a helical span at residues 117–137 (YTGFVFLTFSTSNCLLVLISV). The Cytoplasmic portion of the chain corresponds to 138–158 (DRCISVLYPVWALNHRTEQRA). Residues 159–179 (SWLAFGVWLLAAALCSAHLKF) traverse the membrane as a helical segment. At 180 to 213 (RTTRKWNGCMQCYLQFNLENETAQMWTQEVFGRQ) the chain is on the extracellular side. Residue N199 is glycosylated (N-linked (GlcNAc...) asparagine). A helical transmembrane segment spans residues 214 to 234 (MAVIMAHFLLGFLGPLAIIGT). At 235 to 272 (CAHLIRAKLLREGWVHANRPKRLLLVLVSALSAGSHLT) the chain is on the cytoplasmic side.

This sequence belongs to the G-protein coupled receptor 1 family.

It is found in the cell membrane. In terms of biological role, orphan receptor. The polypeptide is Putative G-protein coupled receptor GPR32P1 (GPR32P1) (Homo sapiens (Human)).